Consider the following 142-residue polypeptide: Hemoglobin subunit alpha (142 aa).

Residues 2-142 (VLSPADKTNV…VSTVLTSKYR (141 aa)) form the Globin domain. At Ser-4 the chain carries Phosphoserine. Lys-8 bears the N6-succinyllysine mark. A Phosphothreonine modification is found at Thr-9. Position 12 is an N6-succinyllysine (Lys-12). Lys-17 is subject to N6-acetyllysine; alternate. Lys-17 is modified (N6-succinyllysine; alternate). Tyr-25 bears the Phosphotyrosine mark. At Ser-36 the chain carries Phosphoserine. N6-succinyllysine is present on Lys-41. Ser-50 carries the post-translational modification Phosphoserine. His-59 lines the O2 pocket. Residue His-88 coordinates heme b. Ser-103 carries the phosphoserine modification. Thr-109 carries the phosphothreonine modification. Residues Ser-125 and Ser-132 each carry the phosphoserine modification. 2 positions are modified to phosphothreonine: Thr-135 and Thr-138. Phosphoserine is present on Ser-139.

The protein belongs to the globin family. Heterotetramer of two alpha chains and two beta chains. As to expression, red blood cells.

Functionally, involved in oxygen transport from the lung to the various peripheral tissues. In terms of biological role, hemopressin acts as an antagonist peptide of the cannabinoid receptor CNR1. Hemopressin-binding efficiently blocks cannabinoid receptor CNR1 and subsequent signaling. The protein is Hemoglobin subunit alpha (HBA) of Sapajus apella (Brown-capped capuchin).